The primary structure comprises 393 residues: Iripin-3 (393 aa).

Residues 1–16 (MKVITAFLSVFVLCSA) form the signal peptide. 2 N-linked (GlcNAc...) asparagine glycosylation sites follow: Asn-104 and Asn-265.

The protein belongs to the serpin family. In terms of assembly, interacts with human KLKB1. Interacts with human ST14. Interacts with human F2 (thrombin). In terms of tissue distribution, saliva (at protein level). Expressed in salivary gland. Expressed in ovary during blood feeding.

Its subcellular location is the secreted. Its function is as follows. Serine protease inhibitor that modulates blood feeding of ticks on vertebrate species. Moderately inhibits host plasma kallikrein (KLKB1), matriptase (ST14), trypsin, plasmin (PLG), thrombin (F2) and coagulation factor VIIa (F7). Slightly inhibits host alpha-chymotrypsin, tPA/tissue-type plasminogen activator (PLAT), uPA/urokinase-type plasminogen activator (PLAU) and coagulation factor XIIa (F12). Slightly inhibits the extrinsic pathway while not affecting the intrinsic and common pathways of host blood coagulation. Decreases synthesis and secretion of IL6 by mouse bone marrow-derived macrophages. Decreases viability of mouse B- and T-cells. Decreases proliferation of mouse CD4+ T-cells in response to stimulation. Inhibits Th1 immune responses in mouse cells. Promotes differentiation of mouse regulatory T-cells. The protein is Iripin-3 of Ixodes ricinus (Common tick).